Consider the following 475-residue polypeptide: Lactate utilization protein B (475 aa).

4Fe-4S ferredoxin-type domains lie at 304 to 334 (GTEFQPVLQCIRCAACVNVCPVYRHIGGHSY) and 353 to 382 (YDDYKELPYASSLCAACTEACPVKIPLHEL). [4Fe-4S] cluster contacts are provided by Cys-313, Cys-316, Cys-319, Cys-323, Cys-366, Cys-369, and Cys-373.

Belongs to the LutB/YkgF family.

Functionally, is involved in L-lactate degradation and allows cells to grow with lactate as the sole carbon source. Has probably a role as an electron transporter during oxidation of L-lactate. The sequence is that of Lactate utilization protein B from Geobacillus sp. (strain WCH70).